Consider the following 192-residue polypeptide: UPF0312 protein Avin_03250 (192 aa).

The first 23 residues, 1–23 (MLKKTLAALALGSALLGAGQAMA), serve as a signal peptide directing secretion.

Belongs to the UPF0312 family. Type 1 subfamily.

The protein resides in the periplasm. The sequence is that of UPF0312 protein Avin_03250 from Azotobacter vinelandii (strain DJ / ATCC BAA-1303).